We begin with the raw amino-acid sequence, 867 residues long: V-set and immunoglobulin domain-containing protein 10-like (867 aa).

An N-terminal signal peptide occupies residues 1–27 (MDNPQALPLFLLLASLVGILTLRASSG). At 28–776 (LQQTNFSSAF…RAGPTLSHGA (749 aa)) the chain is on the extracellular side. The N-linked (GlcNAc...) asparagine glycan is linked to Asn32. Positions 35–45 (SAFSSDSKSSS) are enriched in low complexity. The tract at residues 35–60 (SAFSSDSKSSSQGLGVEVPSIKPPSW) is disordered. N-linked (GlcNAc...) asparagine glycosylation is found at Asn88, Asn96, and Asn144. The segment at 104 to 186 (LSPVSPFSET…PESKFSAETH (83 aa)) is disordered. Residues 137 to 153 (TVKTPASNISTQVSHTK) are compositionally biased toward polar residues. A compositionally biased stretch (basic and acidic residues) spans 159–170 (PDSKFSPDDMDL). Residues 173 to 186 (SAQSPESKFSAETH) are compositionally biased toward polar residues. Ig-like C2-type domains are found at residues 302-394 (PQLS…ADVS) and 402-487 (PTIT…SLLN). Residues Cys324 and Cys378 are joined by a disulfide bond. N-linked (GlcNAc...) asparagine glycosylation is present at Asn423. A disulfide bridge connects residues Cys428 and Cys471. Asn487 carries an N-linked (GlcNAc...) asparagine glycan. The interval 602-627 (ASGCPPPSRASWAREGRPLAPGGGSR) is disordered. 2 N-linked (GlcNAc...) asparagine glycosylation sites follow: Asn641 and Asn650. The chain crosses the membrane as a helical span at residues 777-797 (IAGIVLGSLLGLALLAVLLLL). Over 798-867 (CICCLCRFRG…QAQTPVQLSL (70 aa)) the chain is Cytoplasmic.

As to expression, expressed in the esophagus, particularly in the suprabasilar layers of the epithelium. Expression is largely reduced in esophageal metaplasia, dysplasia, and adenocarcinoma lesions.

It localises to the membrane. The polypeptide is V-set and immunoglobulin domain-containing protein 10-like (VSIG10L) (Homo sapiens (Human)).